A 413-amino-acid chain; its full sequence is MKCSWREGNKIQLLENGEQYYPAVFKAIGEAQERIILETFIWFEDDVGKQLHAALLAAAQRGVKAEVLLDGYGSPDLSDEFVNELTAAGVVFRYYDPRPRLFGMRTNVFRRMHRKIVVIDARIAFIGGLNYSAEHMSSYGPEAKQDYAVRLEGPIVEDILQFELENLPGQSAARRWWRRHHKAEENRQPGEAQVLLVWRDNEEHRDDIERHYLKMLTQARREVIIANAYFFPGYRFLHALRKAARRGVRIKLIIQGEPDMPIVRVGARLLYNYLVKGGVQVFEYRRRPLHGKVALMDDHWATVGSSNLDPLSLSLNLEANVIIHDRNFNQTLRDNLNGIIAADCQQVDETMLPKRTWWNLTKSVLAFHFLRHFPALVGWLPAHTPRLAQVGPPAQPTMETQDRVETENTGVKP.

PLD phosphodiesterase domains lie at 108 to 135 (VFRRMHRKIVVIDARIAFIGGLNYSAEH) and 285 to 312 (RRRPLHGKVALMDDHWATVGSSNLDPLS). Residues H113, K115, D120, H290, K292, and D297 contribute to the active site. The segment at 390–413 (VGPPAQPTMETQDRVETENTGVKP) is disordered.

Belongs to the phospholipase D family. Cardiolipin synthase subfamily. ClsB sub-subfamily.

It localises to the cell membrane. It catalyses the reaction 2 a 1,2-diacyl-sn-glycero-3-phospho-(1'-sn-glycerol) = a cardiolipin + glycerol. Catalyzes the phosphatidyl group transfer from one phosphatidylglycerol molecule to another to form cardiolipin (CL) (diphosphatidylglycerol) and glycerol. The sequence is that of Cardiolipin synthase B from Escherichia coli O6:H1 (strain CFT073 / ATCC 700928 / UPEC).